Here is a 497-residue protein sequence, read N- to C-terminus: Aspartyl/glutamyl-tRNA(Asn/Gln) amidotransferase subunit B (497 aa).

It belongs to the GatB/GatE family. GatB subfamily. As to quaternary structure, heterotrimer of A, B and C subunits.

It carries out the reaction L-glutamyl-tRNA(Gln) + L-glutamine + ATP + H2O = L-glutaminyl-tRNA(Gln) + L-glutamate + ADP + phosphate + H(+). It catalyses the reaction L-aspartyl-tRNA(Asn) + L-glutamine + ATP + H2O = L-asparaginyl-tRNA(Asn) + L-glutamate + ADP + phosphate + 2 H(+). Functionally, allows the formation of correctly charged Asn-tRNA(Asn) or Gln-tRNA(Gln) through the transamidation of misacylated Asp-tRNA(Asn) or Glu-tRNA(Gln) in organisms which lack either or both of asparaginyl-tRNA or glutaminyl-tRNA synthetases. The reaction takes place in the presence of glutamine and ATP through an activated phospho-Asp-tRNA(Asn) or phospho-Glu-tRNA(Gln). This is Aspartyl/glutamyl-tRNA(Asn/Gln) amidotransferase subunit B from Novosphingobium aromaticivorans (strain ATCC 700278 / DSM 12444 / CCUG 56034 / CIP 105152 / NBRC 16084 / F199).